Consider the following 47-residue polypeptide: Protein PsbN (47 aa).

Residues 9–31 (YSLLIAMVTITFGLTGYGLYTAF) form a helical membrane-spanning segment.

Belongs to the PsbN family.

It is found in the cellular thylakoid membrane. Its function is as follows. May play a role in photosystem I and II biogenesis. The protein is Protein PsbN of Prochlorococcus marinus (strain MIT 9303).